The chain runs to 180 residues: Translation machinery-associated protein 16 homolog (180 aa).

Positions Met1–Lys12 are enriched in basic and acidic residues. Positions Met1–Lys32 are disordered. Residues His13–Lys32 show a composition bias toward basic residues.

This sequence belongs to the TMA16 family.

The protein is Translation machinery-associated protein 16 homolog of Drosophila melanogaster (Fruit fly).